Here is an 84-residue protein sequence, read N- to C-terminus: Small ribosomal subunit protein uS15 (84 aa).

It belongs to the universal ribosomal protein uS15 family. In terms of assembly, part of the 30S ribosomal subunit. Forms a bridge to the 50S subunit in the 70S ribosome, contacting the 23S rRNA.

Functionally, one of the primary rRNA binding proteins, it binds directly to 16S rRNA where it helps nucleate assembly of the platform of the 30S subunit by binding and bridging several RNA helices of the 16S rRNA. Forms an intersubunit bridge (bridge B4) with the 23S rRNA of the 50S subunit in the ribosome. This is Small ribosomal subunit protein uS15 from Akkermansia muciniphila (strain ATCC BAA-835 / DSM 22959 / JCM 33894 / BCRC 81048 / CCUG 64013 / CIP 107961 / Muc).